A 404-amino-acid polypeptide reads, in one-letter code: Immediate early response gene 5-like protein (404 aa).

Disordered regions lie at residues 86-107, 160-231, and 308-327; these read AADF…EPAA, AALQ…APAS, and QEEE…EPPG. Residues 177–194 are compositionally biased toward pro residues; the sequence is PLQPGPAPLPLPLPPPAP. The span at 195–231 shows a compositional bias: low complexity; sequence AALCPRDPRAPAACSAPPGAAPPAAAASPPASPAPAS. The span at 308–318 shows a compositional bias: acidic residues; the sequence is QEEEEDDEEDA.

Belongs to the IER family.

The polypeptide is Immediate early response gene 5-like protein (IER5L) (Homo sapiens (Human)).